A 235-amino-acid polypeptide reads, in one-letter code: Purine nucleoside phosphorylase DeoD-type (235 aa).

H4 serves as a coordination point for a purine D-ribonucleoside. Phosphate contacts are provided by residues G20, R24, R43, and 87–90 (RVGT). A purine D-ribonucleoside-binding positions include 179–181 (EME) and 203–204 (SD). The active-site Proton donor is the D204.

Belongs to the PNP/UDP phosphorylase family. Homohexamer; trimer of homodimers.

The catalysed reaction is a purine D-ribonucleoside + phosphate = a purine nucleobase + alpha-D-ribose 1-phosphate. It carries out the reaction a purine 2'-deoxy-D-ribonucleoside + phosphate = a purine nucleobase + 2-deoxy-alpha-D-ribose 1-phosphate. Functionally, catalyzes the reversible phosphorolytic breakdown of the N-glycosidic bond in the beta-(deoxy)ribonucleoside molecules, with the formation of the corresponding free purine bases and pentose-1-phosphate. The protein is Purine nucleoside phosphorylase DeoD-type of Exiguobacterium sibiricum (strain DSM 17290 / CCUG 55495 / CIP 109462 / JCM 13490 / 255-15).